A 62-amino-acid chain; its full sequence is Large ribosomal subunit protein bL28 (62 aa).

Belongs to the bacterial ribosomal protein bL28 family.

The polypeptide is Large ribosomal subunit protein bL28 (Clostridioides difficile (strain 630) (Peptoclostridium difficile)).